We begin with the raw amino-acid sequence, 410 residues long: Platelet-activating factor acetylhydrolase IB subunit alpha (410 aa).

Positions 1–38 are required for self-association and interaction with PAFAH1B2 and PAFAH1B3; the sequence is MVLSQRQRDELNRAIADYLRSNGYEEAYSVFKKEAELD. Residues 1–66 form an interaction with NDE1 region; it reads MVLSQRQRDE…SVIRLQKKVM (66 aa). Residues 1–102 form an interaction with NDEL1 region; sequence MVLSQRQRDE…EWIPRPPEKY (102 aa). Positions 7-39 constitute a LisH domain; it reads QRDELNRAIADYLRSNGYEEAYSVFKKEAELDM. Lys-53 bears the N6-acetyllysine mark. Positions 56-82 form a coiled coil; sequence TSVIRLQKKVMELESKLNEAKEEFTSG. The interval 83–410 is interaction with dynein and dynactin; sequence GPLGQKRDPK…DQTVKVWECR (328 aa). WD repeat units follow at residues 106–147, 148–187, 190–229, 232–271, 274–333, 336–377, and 378–410; these read GHRS…RTLK, GHTDSVQDISFDHSGKLLTSCSADMTIKLWDFQGFECIRT, GHDHNVSSVAIMPNGDHLVSASRDKTIKMWEVQTGYCVKT, GHREWVRMVRPNQDGTLIASCSNDQTVRVWVVATKECKAE, EHEH…CLMT, GHDN…KTLN, and AHEHFVTSLDFHKTAPYVVTGSVDQTVKVWECR. Ser-109 carries the post-translational modification Phosphoserine. The tract at residues 367-409 is interaction with DCX; it reads YKNKRCMKTLNAHEHFVTSLDFHKTAPYVVTGSVDQTVKVWEC. An interaction with NDEL1 region spans residues 388–410; it reads FHKTAPYVVTGSVDQTVKVWECR.

This sequence belongs to the WD repeat LIS1/nudF family. Can self-associate. Component of the cytosolic PAF-AH (I) heterotetrameric enzyme, which is composed of PAFAH1B1 (beta), PAFAH1B2 (alpha2) and PAFAH1B3 (alpha1) subunits. The catalytic activity of the enzyme resides in the alpha1 (PAFAH1B3) and alpha2 (PAFAH1B2) subunits, whereas the beta subunit (PAFAH1B1) has regulatory activity. Trimer formation is not essential for the catalytic activity. Interacts with the catalytic dimer of PAF-AH (I) heterotetrameric enzyme: interacts with PAFAH1B2 homodimer (alpha2/alpha2 homodimer), PAFAH1B3 homodimer (alpha1/alpha1 homodimer) and PAFAH1B2-PAFAH1B3 heterodimer (alpha2/alpha1 heterodimer). Interacts with DCX, dynein, dynactin, IQGAP1, KATNB1, NDE1, NDEL1, NUDC and RSN. Interacts with DISC1, and this interaction is enhanced by NDEL1. Interacts with DAB1 when DAB1 is phosphorylated in response to RELN/reelin signaling. Interacts with INTS13. Interacts with DCDC1.

The protein localises to the cytoplasm. It localises to the cytoskeleton. It is found in the microtubule organizing center. Its subcellular location is the centrosome. The protein resides in the spindle. The protein localises to the nucleus membrane. Its function is as follows. Regulatory subunit (beta subunit) of the cytosolic type I platelet-activating factor (PAF) acetylhydrolase (PAF-AH (I)), an enzyme that catalyzes the hydrolyze of the acetyl group at the sn-2 position of PAF and its analogs and participates in PAF inactivation. Regulates the PAF-AH (I) activity in a catalytic dimer composition-dependent manner. Positively regulates the activity of the minus-end directed microtubule motor protein dynein. May enhance dynein-mediated microtubule sliding by targeting dynein to the microtubule plus end. Required for several dynein- and microtubule-dependent processes such as the maintenance of Golgi integrity, the peripheral transport of microtubule fragments and the coupling of the nucleus and centrosome. Required during brain development for the proliferation of neuronal precursors and the migration of newly formed neurons from the ventricular/subventricular zone toward the cortical plate. Neuronal migration involves a process called nucleokinesis, whereby migrating cells extend an anterior process into which the nucleus subsequently translocates. During nucleokinesis dynein at the nuclear surface may translocate the nucleus towards the centrosome by exerting force on centrosomal microtubules. Also required for proper activation of Rho GTPases and actin polymerization at the leading edge of locomoting cerebellar neurons and postmigratory hippocampal neurons in response to calcium influx triggered via NMDA receptors. May also play a role in other forms of cell locomotion including the migration of fibroblasts during wound healing. Required for dynein recruitment to microtubule plus ends and BICD2-bound cargos. May modulate the Reelin pathway through interaction of the PAF-AH (I) catalytic dimer with VLDLR. In Macaca fascicularis (Crab-eating macaque), this protein is Platelet-activating factor acetylhydrolase IB subunit alpha.